A 351-amino-acid polypeptide reads, in one-letter code: Protein IQ-DOMAIN 27 (351 aa).

The segment at 15–37 is disordered; that stretch reads KKSKDRSHVSGGDSVKGGDHSGD. Residues 98–114 form a calmodulin-binding region; sequence EERWAAVKIQKVFRGSL. IQ domains lie at 99 to 127 and 128 to 150; these read ERWAAVKIQKVFRGSLARKALRALKGIVK and LQALVRGYLVRKRAAAMLQSIQT. The Nuclear localization signal signature appears at 191 to 198; the sequence is DRRTKIVE. Over residues 299 to 310 the composition is skewed to basic residues; sequence SFKAKVRSHSAP. The disordered stretch occupies residues 299-351; it reads SFKAKVRSHSAPRQRSERQRLSLDEVMASKSSVSGVSMSHQHPPRHSCSCDPL. Over residues 312 to 321 the composition is skewed to basic and acidic residues; the sequence is QRSERQRLSL. A compositionally biased stretch (low complexity) spans 324–337; sequence VMASKSSVSGVSMS.

This sequence belongs to the IQD family. Binds to multiple calmodulin (CaM) in the presence of Ca(2+) and CaM-like proteins.

It localises to the nucleus. It is found in the nucleus envelope. The protein localises to the cytoplasm. Its subcellular location is the cytoskeleton. In terms of biological role, may be involved in cooperative interactions with calmodulins or calmodulin-like proteins. Recruits calmodulin proteins to microtubules, thus being a potential scaffold in cellular signaling and trafficking. May associate with nucleic acids and regulate gene expression at the transcriptional or post-transcriptional level. This chain is Protein IQ-DOMAIN 27, found in Arabidopsis thaliana (Mouse-ear cress).